Consider the following 97-residue polypeptide: Large ribosomal subunit protein bL27 (97 aa).

Polar residues predominate over residues 1 to 10; that stretch reads MVKLNLSNLQ. Residues 1-12 constitute a propeptide that is removed on maturation; the sequence is MVKLNLSNLQHF. Positions 1–38 are disordered; that stretch reads MVKLNLSNLQHFAHKKGGGSTSNGRDSQAKRLGAKAAD.

It belongs to the bacterial ribosomal protein bL27 family. Post-translationally, the N-terminus is cleaved by ribosomal processing cysteine protease Prp.

In Streptococcus equi subsp. zooepidemicus (strain H70), this protein is Large ribosomal subunit protein bL27.